Here is a 348-residue protein sequence, read N- to C-terminus: MPVERMRMRPWLEEQINSNTIPGLKWINKEKKIFQIPWMHAARHGWDVEKDAPLFRNWAIHTGKYQSGVDKPDPKTWKANFRCAMNSLPDIEEVKDKSIKKGNNAFRVYRMLPLSERPSKKGKKTKSEKDDKFKQIKQEPVESSFGINGLNDVTSDYFLSSSIKNEVDSTVNIVVVGQPHLDGSSEEQVIVANPPDVCQVVEVTTESDEQPLSMSQLYPLQISPVSSYAESETTDSVPSDEENAEGRLHWQKKNIEGKQYLSNLGMRNTSHMLPSMATFVANKPDLQVTIKEESCPLPYNSSWPPFPDIPLPQVVSTASTSSSRPDRETRASVIKKTSDITQSRVKSC.

Positions 5-113 (RMRMRPWLEE…NAFRVYRMLP (109 aa)) form a DNA-binding region, IRF tryptophan pentad repeat. N6-acetyllysine occurs at positions 75 and 78. Positions 117–137 (RPSKKGKKTKSEKDDKFKQIK) are disordered. Basic and acidic residues predominate over residues 125–137 (TKSEKDDKFKQIK). Residues Lys-137, Lys-164, and Lys-291 each participate in a glycyl lysine isopeptide (Lys-Gly) (interchain with G-Cter in SUMO) cross-link. The tract at residues 311–348 (LPQVVSTASTSSSRPDRETRASVIKKTSDITQSRVKSC) is disordered. Polar residues-rich tracts occupy residues 314–323 (VVSTASTSSS) and 339–348 (DITQSRVKSC).

It belongs to the IRF family. In terms of assembly, interacts with CREBBP in growing cells; the interaction acetylates IRF2 and regulates IRF2-dependent H4 promoter activity.

The protein resides in the nucleus. Specifically binds to the upstream regulatory region of type I IFN and IFN-inducible MHC class I genes (the interferon consensus sequence (ICS)) and represses those genes. Also acts as an activator for several genes including H4 and IL7. Constitutively binds to the ISRE promoter to activate IL7. Involved in cell cycle regulation through binding the site II (HiNF-M) promoter region of H4 and activating transcription during cell growth. Antagonizes IRF1 transcriptional activation. The sequence is that of Interferon regulatory factor 2 (IRF2) from Gallus gallus (Chicken).